Here is a 298-residue protein sequence, read N- to C-terminus: Protoheme IX farnesyltransferase (298 aa).

The next 9 membrane-spanning stretches (helical) occupy residues V26–V46, I52–V72, F99–P119, L120–L140, I148–G168, A174–L194, L219–Q239, S241–V261, and F276–I296.

It belongs to the UbiA prenyltransferase family. Protoheme IX farnesyltransferase subfamily.

Its subcellular location is the cell inner membrane. It carries out the reaction heme b + (2E,6E)-farnesyl diphosphate + H2O = Fe(II)-heme o + diphosphate. It functions in the pathway porphyrin-containing compound metabolism; heme O biosynthesis; heme O from protoheme: step 1/1. Its function is as follows. Converts heme B (protoheme IX) to heme O by substitution of the vinyl group on carbon 2 of heme B porphyrin ring with a hydroxyethyl farnesyl side group. This Nitrosospira multiformis (strain ATCC 25196 / NCIMB 11849 / C 71) protein is Protoheme IX farnesyltransferase.